The primary structure comprises 424 residues: Serine--tRNA ligase (424 aa).

Position 231-233 (231-233 (TAE)) interacts with L-serine. 262 to 264 (RSE) lines the ATP pocket. Glu-285 is an L-serine binding site. Residue 349–352 (EISS) coordinates ATP. Ser-385 provides a ligand contact to L-serine.

Belongs to the class-II aminoacyl-tRNA synthetase family. Type-1 seryl-tRNA synthetase subfamily. In terms of assembly, homodimer. The tRNA molecule binds across the dimer.

It is found in the cytoplasm. The catalysed reaction is tRNA(Ser) + L-serine + ATP = L-seryl-tRNA(Ser) + AMP + diphosphate + H(+). The enzyme catalyses tRNA(Sec) + L-serine + ATP = L-seryl-tRNA(Sec) + AMP + diphosphate + H(+). The protein operates within aminoacyl-tRNA biosynthesis; selenocysteinyl-tRNA(Sec) biosynthesis; L-seryl-tRNA(Sec) from L-serine and tRNA(Sec): step 1/1. Its function is as follows. Catalyzes the attachment of serine to tRNA(Ser). Is also able to aminoacylate tRNA(Sec) with serine, to form the misacylated tRNA L-seryl-tRNA(Sec), which will be further converted into selenocysteinyl-tRNA(Sec). The protein is Serine--tRNA ligase of Bacillus pumilus (strain SAFR-032).